Reading from the N-terminus, the 233-residue chain is UPF0128 protein MJ1463 (233 aa).

Belongs to the UPF0128 family.

This Methanocaldococcus jannaschii (strain ATCC 43067 / DSM 2661 / JAL-1 / JCM 10045 / NBRC 100440) (Methanococcus jannaschii) protein is UPF0128 protein MJ1463.